A 445-amino-acid polypeptide reads, in one-letter code: Transmembrane protein 184C (445 aa).

7 helical membrane-spanning segments follow: residues leucine 15 to leucine 35, alanine 46 to leucine 66, isoleucine 84 to isoleucine 104, tyrosine 177 to tyrosine 197, tyrosine 210 to tyrosine 230, valine 252 to isoleucine 272, and alanine 285 to alanine 305. 2 disordered regions span residues glutamate 369–methionine 393 and threonine 421–serine 445. Residues histidine 370–serine 390 are compositionally biased toward polar residues.

Belongs to the TMEM184 family.

The protein resides in the membrane. Functionally, may play a role in cell growth. The protein is Transmembrane protein 184C (TMEM184C) of Gallus gallus (Chicken).